The chain runs to 262 residues: MSNSVRPAVKLTGIRKNFGLLEVLHGVSLTANQGEVISILGSSGSGKSTLLRCVNMLEVPNSGSVSIMGEEIALNHRSGHPSRPKYPKQVNRLRERAAMVFQSFHLWSHLTILQNVMEAPLHVQRRDRKECHAEAEALLERVGIASKRNAFPSELSGGQQQRAAIARALAMRPEVLLFDEPTSALDPELVGEVLRVMRNLAAEGRTMLIVTHEMDFARDVSSRSVFLHQGVIAEEGLSSEMFANPRTERFRQFLRRDGAASH.

Positions 9–254 constitute an ABC transporter domain; the sequence is VKLTGIRKNF…PRTERFRQFL (246 aa). 41–48 provides a ligand contact to ATP; sequence GSSGSGKS.

It belongs to the ABC transporter superfamily.

Its subcellular location is the cell inner membrane. In terms of biological role, component of the octopine active transport system probably consisting of four subunits: Q, M, P and T. This Rhizobium meliloti (Ensifer meliloti) protein is Octopine permease ATP-binding protein P (occP).